We begin with the raw amino-acid sequence, 540 residues long: 2-succinyl-5-enolpyruvyl-6-hydroxy-3-cyclohexene-1-carboxylate synthase (540 aa).

The protein belongs to the TPP enzyme family. MenD subfamily. Homodimer. It depends on Mg(2+) as a cofactor. Mn(2+) is required as a cofactor. Thiamine diphosphate serves as cofactor.

The enzyme catalyses isochorismate + 2-oxoglutarate + H(+) = 5-enolpyruvoyl-6-hydroxy-2-succinyl-cyclohex-3-ene-1-carboxylate + CO2. It functions in the pathway quinol/quinone metabolism; 1,4-dihydroxy-2-naphthoate biosynthesis; 1,4-dihydroxy-2-naphthoate from chorismate: step 2/7. It participates in quinol/quinone metabolism; menaquinone biosynthesis. Catalyzes the thiamine diphosphate-dependent decarboxylation of 2-oxoglutarate and the subsequent addition of the resulting succinic semialdehyde-thiamine pyrophosphate anion to isochorismate to yield 2-succinyl-5-enolpyruvyl-6-hydroxy-3-cyclohexene-1-carboxylate (SEPHCHC). This Mycobacteroides abscessus (strain ATCC 19977 / DSM 44196 / CCUG 20993 / CIP 104536 / JCM 13569 / NCTC 13031 / TMC 1543 / L948) (Mycobacterium abscessus) protein is 2-succinyl-5-enolpyruvyl-6-hydroxy-3-cyclohexene-1-carboxylate synthase.